We begin with the raw amino-acid sequence, 240 residues long: Ribosomal RNA small subunit methyltransferase G (240 aa).

S-adenosyl-L-methionine is bound by residues G80, F85, 103 to 105 (DSS), 131 to 132 (AE), and R150.

This sequence belongs to the methyltransferase superfamily. RNA methyltransferase RsmG family.

It localises to the cytoplasm. Its function is as follows. Specifically methylates the N7 position of a guanine in 16S rRNA. In Thermoanaerobacter sp. (strain X514), this protein is Ribosomal RNA small subunit methyltransferase G.